A 444-amino-acid chain; its full sequence is Transcription activator AKTR-1 (444 aa).

A DNA-binding region (zn(2)-C6 fungal-type) is located at residues 16-43; sequence CDFCTQSKLRCNKNKPSCRRCTIQQQPC. The segment at 49 to 87 is disordered; sequence RRTGRPPKHPRKANDCQEANGQHGEQDPVTSTPGGSCQQ. The span at 50–59 shows a compositional bias: basic residues; the sequence is RTGRPPKHPR. Polar residues predominate over residues 76–87; it reads PVTSTPGGSCQQ.

The protein localises to the nucleus. Its function is as follows. Transcription factor that regulates the expression of the gene clusters that mediate the biosynthesis of the host-selective toxins (HSTs) AK-toxins responsible for Japanese pear black spot disease by the Japanese pear pathotype. AK-toxins are esters of 9,10-epoxy 8-hydroxy 9-methyldecatrienoic acid (EDA). On cellular level, AK-toxins affect plasma membrane of susceptible cells and cause a sudden increase in loss of K(+) after a few minutes of toxin treatment. The protein is Transcription activator AKTR-1 of Alternaria alternata (Alternaria rot fungus).